The chain runs to 481 residues: p-aminobenzoyl-glutamate hydrolase subunit B (481 aa).

Forms a heterodimer with AbgA. Requires Mn(2+) as cofactor.

Component of the p-aminobenzoyl-glutamate hydrolase multicomponent enzyme system which catalyzes the cleavage of p-aminobenzoyl-glutamate (PABA-GLU) to form p-aminobenzoate (PABA) and glutamate. AbgAB does not degrade dipeptides and the physiological role of abgABT should be clarified. The sequence is that of p-aminobenzoyl-glutamate hydrolase subunit B (abgB) from Escherichia coli (strain K12).